The following is a 354-amino-acid chain: Fusarinine C esterase sidJ (354 aa).

The protein belongs to the sidJ hydrolase family. Homodimer.

The enzyme catalyses fusarinine C + 3 H2O = 3 fusarinine + Fe(3+). Displays specific fusarinine C (FsC) esterase activity but does not hydrolyze triacetylfusarinine C (TAFC), which has the same core structure as fusarinine C. Both extra- and intracellular siderophores have been shown to be crucial for the virulence. Subsequent to chelation of iron and uptake, FsC and TAFC are hydrolyzed and the iron is transferred to the metabolism or to the intracellular siderophore ferricrocin (FC) for transport and storage of iron. This is Fusarinine C esterase sidJ from Aspergillus fumigatus (strain ATCC MYA-4609 / CBS 101355 / FGSC A1100 / Af293) (Neosartorya fumigata).